Consider the following 163-residue polypeptide: Leptin (163 aa).

Positions 1–18 (MCWRPLCRLWSYLVYVQA) are cleaved as a signal peptide. C113 and C163 form a disulfide bridge.

This sequence belongs to the leptin family. As to expression, not exclusively localized in adipose tissue but is also expressed in liver.

The protein resides in the secreted. Key player in the regulation of energy balance and body weight control. Once released into the circulation, has central and peripheral effects by binding LEPR, found in many tissues, which results in the activation of several major signaling pathways. In Gallus gallus (Chicken), this protein is Leptin (LEP).